The chain runs to 276 residues: Type II pantothenate kinase (276 aa).

ATP is bound at residue 8–15; the sequence is DAGGTLTK. Glutamate 76 serves as the catalytic Proton acceptor. ATP-binding positions include threonine 105, 127-131, phenylalanine 143, and serine 230; that span reads GGTIM.

This sequence belongs to the type II pantothenate kinase family. In terms of assembly, homodimer.

It localises to the cytoplasm. It catalyses the reaction (R)-pantothenate + ATP = (R)-4'-phosphopantothenate + ADP + H(+). Its pathway is cofactor biosynthesis; coenzyme A biosynthesis; CoA from (R)-pantothenate: step 1/5. Its function is as follows. Catalyzes the phosphorylation of pantothenate (Pan), the first step in CoA biosynthesis. In Bacillus cereus (strain AH820), this protein is Type II pantothenate kinase.